The chain runs to 130 residues: Capsid protein (130 aa).

A viral RNA-binding region spans residues 32–105 (EWISSNSRSQ…FATNDDCALI (74 aa)).

It belongs to the Leviviricetes capsid protein family. As to quaternary structure, homodimer. The capsid proteins form dimers that assemble by group of 5. Twelve such pentamers are linked together with free dimers. The homodimers binds to the viral RNA via an operator hairpin, but also to many other RNA sequences in the viral genome; this interaction probably shifts the virus from the replicative to the assembly phase and ensures specific encapsidation of the viral genome.

Its subcellular location is the virion. Functionally, capsid protein self-assembles to form an icosahedral capsid with a T=3 symmetry, about 26 nm in diameter, and consisting of 89 capsid proteins dimers (178 capsid proteins). Involved in viral genome encapsidation through the interaction between a capsid protein dimer and the multiple packaging signals present in the RNA genome. The capsid also contains 1 copy of the A2 maturation protein. Its function is as follows. Acts as a translational repressor of viral replicase synthesis late in infection. This latter function is the result of capsid protein interaction with an RNA hairpin which contains the replicase ribosome-binding site. This chain is Capsid protein, found in Enterobacteria phage fr (Bacteriophage fr).